Consider the following 499-residue polypeptide: Glycerol kinase 2 (499 aa).

Position 13 (threonine 13) interacts with ADP. The ATP site is built by threonine 13, threonine 14, and serine 15. Sn-glycerol 3-phosphate is bound at residue threonine 13. An ADP-binding site is contributed by arginine 17. Positions 83, 84, 134, and 241 each coordinate sn-glycerol 3-phosphate. Positions 83, 84, 134, 241, and 242 each coordinate glycerol. Positions 263 and 306 each coordinate ADP. 4 residues coordinate ATP: threonine 263, glycine 306, glutamine 310, and glycine 407. An ADP-binding site is contributed by glycine 407.

The protein belongs to the FGGY kinase family.

It carries out the reaction glycerol + ATP = sn-glycerol 3-phosphate + ADP + H(+). The protein operates within polyol metabolism; glycerol degradation via glycerol kinase pathway; sn-glycerol 3-phosphate from glycerol: step 1/1. Key enzyme in the regulation of glycerol uptake and metabolism. Catalyzes the phosphorylation of glycerol to yield sn-glycerol 3-phosphate. This Saccharolobus solfataricus (strain ATCC 35092 / DSM 1617 / JCM 11322 / P2) (Sulfolobus solfataricus) protein is Glycerol kinase 2.